Consider the following 211-residue polypeptide: Large ribosomal subunit protein uL3 (211 aa).

This sequence belongs to the universal ribosomal protein uL3 family. Part of the 50S ribosomal subunit. Forms a cluster with proteins L14 and L19.

Its function is as follows. One of the primary rRNA binding proteins, it binds directly near the 3'-end of the 23S rRNA, where it nucleates assembly of the 50S subunit. The protein is Large ribosomal subunit protein uL3 of Citrifermentans bemidjiense (strain ATCC BAA-1014 / DSM 16622 / JCM 12645 / Bem) (Geobacter bemidjiensis).